The sequence spans 486 residues: MMNNNESEAENQRLLDELMNQTKVLQETLDFSLVTPTPHHNDDYKIHGSAYPGGETPAQQHEKLSYINTHNSNDNNNLMGSQARSNSQTPTASTIYEEAESQSSYLDDMFRTSQGGRPVTQNSISSIGQGPLRSSYSMAYDSPVDRAMNTPLQQQEGLKAELPHDFLFQHGTDDTMYNLTDDLSSSLSSSINSDMMTPNTYSSSFSYNPQSLGPASVSSTYSPKVRSPSSSFRAGSFLSSSFRHGSINTPRTRHTSISSNMTENIGPGSVPKILGGLTSDEKLRRKREFHNAVERRRRELIKQKIKELGQLVPPSLLNYDDLGKQIKPNKGIILDRTVEYLQYLAEILEIQARKKKALLAKIKELEEKKSSVAALSPFTNNHHASSGQNNSENSEERIIDIRSVPNALMNEQNSKAELHNWEPPLYDSVGNHNHAGTMESHPHTNIHEELKEFLSGDLIEAEDNAKLMFGDDNSNPADYLLEFGSG.

Positions 27–35 match the 9aaTAD 1 motif; the sequence is ETLDFSLVT. Composition is skewed to polar residues over residues 75 to 94 and 101 to 130; these read NNNLMGSQARSNSQTPTAST and SQSSYLDDMFRTSQGGRPVTQNSISSIGQG. Positions 75-130 are disordered; that stretch reads NNNLMGSQARSNSQTPTASTIYEEAESQSSYLDDMFRTSQGGRPVTQNSISSIGQG. Phosphoserine occurs at positions 81, 123, and 142. Phosphothreonine is present on Thr150. The short motif at 189–197 is the 9aaTAD 2 element; it reads SSINSDMMT. 3 positions are modified to phosphoserine: Ser227, Ser236, and Ser241. The tract at residues 243 to 274 is disordered; sequence RHGSINTPRTRHTSISSNMTENIGPGSVPKIL. Polar residues predominate over residues 246–263; sequence SINTPRTRHTSISSNMTE. Ser269 carries the post-translational modification Phosphoserine. A bHLH domain is found at 285–344; it reads RKREFHNAVERRRRELIKQKIKELGQLVPPSLLNYDDLGKQIKPNKGIILDRTVEYLQYL. Residues 374-395 are disordered; that stretch reads ALSPFTNNHHASSGQNNSENSE.

In terms of assembly, binds DNA as a heterodimer with RTG1.

The protein localises to the nucleus. Functionally, transcription factor that regulates CIT2 gene expression. Binds to two identical sites oriented as inverted repeats 28 bp apart in a regulatory upstream activation sequence element (UASR) in the CIT2 promoter. The core binding site is 5'-GGTCAC-3'. The sequence is that of Retrograde regulation protein 3 (RTG3) from Saccharomyces cerevisiae (strain ATCC 204508 / S288c) (Baker's yeast).